Consider the following 237-residue polypeptide: 1-(5-phosphoribosyl)-5-[(5-phosphoribosylamino)methylideneamino] imidazole-4-carboxamide isomerase (237 aa).

Aspartate 8 serves as the catalytic Proton acceptor. Catalysis depends on aspartate 129, which acts as the Proton donor.

Belongs to the HisA/HisF family.

The protein localises to the cytoplasm. The catalysed reaction is 1-(5-phospho-beta-D-ribosyl)-5-[(5-phospho-beta-D-ribosylamino)methylideneamino]imidazole-4-carboxamide = 5-[(5-phospho-1-deoxy-D-ribulos-1-ylimino)methylamino]-1-(5-phospho-beta-D-ribosyl)imidazole-4-carboxamide. It participates in amino-acid biosynthesis; L-histidine biosynthesis; L-histidine from 5-phospho-alpha-D-ribose 1-diphosphate: step 4/9. This is 1-(5-phosphoribosyl)-5-[(5-phosphoribosylamino)methylideneamino] imidazole-4-carboxamide isomerase from Dehalococcoides mccartyi (strain ATCC BAA-2266 / KCTC 15142 / 195) (Dehalococcoides ethenogenes (strain 195)).